Here is an 856-residue protein sequence, read N- to C-terminus: Cyclic di-GMP phosphodiesterase PdeB (856 aa).

2 helical membrane-spanning segments follow: residues 7–27 and 230–250; these read ILVF…YCLG and WVSL…YVWL. One can recognise a PAS domain in the interval 303-350; the sequence is QKERGKITLESIAEAVILTDIEAKVIYMNPKAETLLEVASSNAVGESL. Positions 454 to 587 constitute a GGDEF domain; that stretch reads RSLAVCYLDL…GTNQIHIYDD (134 aa). Positions 598 to 852 constitute an EAL domain; it reads APKWAVRIAQ…SYCEQFETRL (255 aa).

It is found in the cell membrane. It catalyses the reaction 3',3'-c-di-GMP + H2O = 5'-phosphoguanylyl(3'-&gt;5')guanosine + H(+). In terms of biological role, affects motility and biofilm formation, and is linked to the regulation of sulfate uptake and assimilation. The protein is Cyclic di-GMP phosphodiesterase PdeB (pdeB) of Shewanella oneidensis (strain ATCC 700550 / JCM 31522 / CIP 106686 / LMG 19005 / NCIMB 14063 / MR-1).